A 352-amino-acid polypeptide reads, in one-letter code: Protein Wnt-3a (352 aa).

A signal peptide spans 1–18 (MAPLGYFLLLCSLKQALG). Intrachain disulfides connect Cys-77–Cys-88, Cys-128–Cys-136, Cys-138–Cys-155, Cys-203–Cys-217, Cys-205–Cys-212, Cys-281–Cys-312, Cys-297–Cys-307, Cys-311–Cys-351, Cys-327–Cys-342, Cys-329–Cys-339, and Cys-334–Cys-335. N-linked (GlcNAc...) asparagine glycosylation occurs at Asn-87. Ser-209 carries O-palmitoleoyl serine; by PORCN lipidation. Residue Asn-298 is glycosylated (N-linked (GlcNAc...) asparagine).

This sequence belongs to the Wnt family. Forms a soluble 1:1 complex with AFM; this prevents oligomerization and is required for prolonged biological activity. The complex with AFM may represent the physiological form in body fluids. Homooligomer; disulfide-linked, leading to inactivation. Interacts with PORCN. Interacts with APCDD1 and WLS. Component of the Wnt-Fzd-LRP5-LRP6 signaling complex that contains a WNT protein, a FZD protein and LRP5 or LRP6. Interacts directly in the complex with LRP6. Interacts with glypican GPC3. Interacts with PKD1 (via extracellular domain). Interacts with FZD5. Post-translationally, palmitoleoylation by PORCN is required for efficient binding to frizzled receptors. Palmitoleoylation is required for proper trafficking to cell surface, vacuolar acidification is critical to release palmitoleoylated WNT3A from WLS in secretory vesicles. Depalmitoleoylated by NOTUM, leading to inhibit Wnt signaling pathway, possibly by promoting disulfide bond formation and oligomerization. In terms of processing, proteolytic processing by TIKI1 and TIKI2 promotes oxidation and formation of large disulfide-bond oligomers, leading to inactivation of WNT3A. Disulfide bonds have critical and distinct roles in secretion and activity. Loss of each conserved cysteine in WNT3A results in high molecular weight oxidized Wnt oligomers, which are formed through inter-Wnt disulfide bonding. In terms of tissue distribution, moderately expressed in placenta and at low levels in adult lung, spleen, and prostate.

The protein localises to the secreted. Its subcellular location is the extracellular space. The protein resides in the extracellular matrix. Functionally, ligand for members of the frizzled family of seven transmembrane receptors. Functions in the canonical Wnt signaling pathway that results in activation of transcription factors of the TCF/LEF family. Required for normal embryonic mesoderm development and formation of caudal somites. Required for normal morphogenesis of the developing neural tube. Mediates self-renewal of the stem cells at the bottom on intestinal crypts (in vitro). The chain is Protein Wnt-3a (WNT3A) from Homo sapiens (Human).